Consider the following 377-residue polypeptide: SH2/SH3 adapter protein NCK1 (377 aa).

A2 carries the N-acetylalanine modification. Residues 2–61 (AEEVVVVAKFDYVAQQEQELDIKKNERLWLLDDSKSWWRVRNSMNKTGFVPSNYVERKNS) enclose the SH3 1 domain. Residues S85, S89, S91, and S96 each carry the phosphoserine modification. Y105 carries the post-translational modification Phosphotyrosine. One can recognise an SH3 2 domain in the interval 106-165 (DLNMPAYVKFNYMAEREDELSLIKGTKVIVMEKCSDGWWRGSYNGQVGWFPSNYVTEEGD). A Phosphoserine modification is found at S166. The SH3 3 domain occupies 190-252 (QVLHVVQALY…PKNYVTVMQN (63 aa)). The 95-residue stretch at 282 to 376 (WYYGKVTRHQ…GEKLYLVKHL (95 aa)) folds into the SH2 domain.

Interacts (via SH2 domain and SH3 domain 2) with EGFR. Interacts with PAK1 and SOS1. Interacts (via SH3 domains) with PKN2. Associates with BLNK, PLCG1, VAV1 and NCK1 in a B-cell antigen receptor-dependent fashion. Interacts with SOCS7. This interaction is required for nuclear import. Part of a complex containing PPP1R15B, PP1 and NCK1. Interacts with RALGPS1. Interacts with CAV2 (tyrosine phosphorylated form). Interacts with ADAM15. Interacts with FASLG. Directly interacts with RASA1. Interacts with isoform 4 of MINK1. Interacts with FLT1 (tyrosine phosphorylated). Interacts with KDR (tyrosine phosphorylated). Interacts (via SH2 domain) with EPHB1; activates the JUN cascade to regulate cell adhesion. Interacts with EPHA2. Interacts (via SH2 domain) with PDGFRB (tyrosine phosphorylated). Interacts with the inactive form of EIF2AK2/PKR. Interacts with PTPN1. Interacts with INSR/insulin receptor (in response to insulin stimulation); This interaction may mediate PTPN1 recruitment leading to INSR dephosphorylation. Interacts with IRS1. Post-translationally, phosphorylated on Ser and Tyr residues. Phosphorylated in response to activation of EGFR and FcERI. Phosphorylated by activated PDGFRB.

Its subcellular location is the cytoplasm. The protein localises to the endoplasmic reticulum. The protein resides in the nucleus. Functionally, adapter protein which associates with tyrosine-phosphorylated growth factor receptors, such as KDR and PDGFRB, or their cellular substrates. Maintains low levels of EIF2S1 phosphorylation by promoting its dephosphorylation by PP1. Plays a role in the DNA damage response, not in the detection of the damage by ATM/ATR, but for efficient activation of downstream effectors, such as that of CHEK2. Plays a role in ELK1-dependent transcriptional activation in response to activated Ras signaling. Modulates the activation of EIF2AK2/PKR by dsRNA. May play a role in cell adhesion and migration through interaction with ephrin receptors. The sequence is that of SH2/SH3 adapter protein NCK1 (NCK1) from Homo sapiens (Human).